The chain runs to 372 residues: MSEVLRGARRIVVKVGSSLVTNEGRGVDAAAIGNWCRQLASLAGQGREVLMVSSGAIAEGMKRLGWNARPKEIHELQAAAAVGQMGLAQMYESKLSEHGIGSAQVLLTHADLADRERYLNARSTLLTLLSLKVIPVINENDTVVNDEIKFGDNDTLGALVANLVDADALVILTDQPGLYSADPRKDPQARFIGEAVAGTPELERMAGGAGSSLGRGGMITKVLAAKRASSSGASTVIAWGREPDVLLRLADGEAIGTLLVARTAKLAARKQWMADHLQMRGTVVIDDGAVAKLRDEGKSLLPIGVVEVQGEFVRGDVIAVRSQVGIEIARGLANYASSEARLIARKPSSQIESLLGYSNEPEMIHRTNLVLA.

K14 serves as a coordination point for ATP. The substrate site is built by S54, D141, and N153. 173–174 (TD) provides a ligand contact to ATP. One can recognise a PUA domain in the interval 280–358 (RGTVVIDDGA…SQIESLLGYS (79 aa)).

This sequence belongs to the glutamate 5-kinase family.

The protein resides in the cytoplasm. The enzyme catalyses L-glutamate + ATP = L-glutamyl 5-phosphate + ADP. The protein operates within amino-acid biosynthesis; L-proline biosynthesis; L-glutamate 5-semialdehyde from L-glutamate: step 1/2. Functionally, catalyzes the transfer of a phosphate group to glutamate to form L-glutamate 5-phosphate. The protein is Glutamate 5-kinase of Methylibium petroleiphilum (strain ATCC BAA-1232 / LMG 22953 / PM1).